We begin with the raw amino-acid sequence, 1298 residues long: Ras guanine nucleotide exchange factor Q (1298 aa).

5 disordered regions span residues 1 to 26 (MDINNNIDNITNSNNNIEKNNNINNF), 46 to 88 (NNNI…SIEG), 211 to 271 (NISN…GPLK), 314 to 384 (YTPP…QQQQ), and 459 to 533 (LSNG…STTT). Composition is skewed to low complexity over residues 211–245 (NISNNNNNNNNNSNNSNNNNNMSSSDNNNNSNSNN) and 315–384 (TPPS…QQQQ). Residues 352–389 (SSLNANNNTNNNNQQLQQQQQQQQQQQLQQQQQLTKSY) adopt a coiled-coil conformation. A compositionally biased stretch (polar residues) spans 473–482 (LHLSTESTTS). 2 stretches are compositionally biased toward low complexity: residues 483-501 (NNNNNNNNNNNNNNNNNNN) and 508-533 (TTNSATTTTTTTTTTTTTTTTNSTTT). Residues 550-689 (DKDEVIAGER…YLKKAINDSG (140 aa)) enclose the N-terminal Ras-GEF domain. The 79-residue stretch at 723–801 (MSQSLQLKER…SSSSTTTTTT (79 aa)) folds into the DEP domain. Disordered regions lie at residues 781-864 (SKSG…PNSI) and 884-920 (GIANGSSTPSIPSSVTSPLTNSKSTLNSTPSSSSNSF). Positions 783-864 (SGSSFSPSSS…ITSTSLPNSI (82 aa)) are enriched in low complexity. Residues 964 to 1193 (HPVEIARQLT…YKASHMIEQP (230 aa)) form the Ras-GEF domain. The interval 1214 to 1267 (TTTTTNNLNNNNNNNNPNNNNNNNNNSANNKSSPSPSPSSSPITSSPISSLTIN) is disordered.

Promotes the exchange of Ras-bound GDP by GTP. Seems to play a role in chemotaxis. In Dictyostelium discoideum (Social amoeba), this protein is Ras guanine nucleotide exchange factor Q (gefQ).